A 242-amino-acid polypeptide reads, in one-letter code: HTH domain-truncated transcriptional regulator QseD (242 aa).

It belongs to the LysR transcriptional regulatory family.

Its function is as follows. Represses EHEC virulence expression. Down-regulates expression of LEE (locus of enterocyte effacement) and iraD genes, and alters AE (attaching and effacing) lesion formation. May regulate transcription through interactions with another HTH DNA-binding protein. The protein is HTH domain-truncated transcriptional regulator QseD (qseD) of Escherichia coli O157:H7.